The following is a 1507-amino-acid chain: Paired amphipathic helix protein sin-3 (1507 aa).

Disordered regions lie at residues 1–26 (MYNPPPGGGGGNNGGDQSQQQPTNNA), 228–286 (PLAL…PPRV), 397–450 (ELGS…MMEE), 543–569 (VDDVPGPSNAPQEIKKPDDIEKKDSSK), and 1349–1434 (IPRE…MDHL). Polar residues predominate over residues 16–26 (DQSQQQPTNNA). The segment covering 270–279 (RQNRPGRRKK) has biased composition (basic residues). The 71-residue stretch at 282–352 (GPPRVDEALA…LGFNTFLPTG (71 aa)) folds into the PAH domain. Acidic residues predominate over residues 427 to 438 (DGIDDEDDEESG). 2 stretches are compositionally biased toward basic and acidic residues: residues 439-450 (IEDKNNEEMMEE) and 555-568 (EIKKPDDIEKKDSS). Composition is skewed to acidic residues over residues 1354–1365 (KDDDDDDDEEGN), 1373–1382 (NVKDEDDGGD), and 1389–1421 (PDDDQPPPSNDDGDDEEDEDDEEDGPSGADEPE).

Component of the SIN3S complex, which contains at least sin-3, hda-1, athp-1 and mrg-1. Interacts with ztf-11; the interaction is weak. Interacts with cfp-1. In terms of tissue distribution, expressed in all ray structural cells including ray 6, 7, 8 and 9 of the male tail. Also expressed in the inner labial neurons, socket cells, the cephalic neurons in the head and the ventral nerve cord.

The protein resides in the nucleus. In terms of biological role, probable transcriptional repressor required for the deposition of dimethylated 'Lys-9' of histone H3 (H3K9me2) on asynapsed chromosome pairs (both autosomes and sex chromosomes) during meiosis, but this does not seem to solely affect the transcriptional status. Plays a role in ray fusion and patterning in the male tail, and this may be through activity of the histone deacetylase complex (HDAC). This is Paired amphipathic helix protein sin-3 from Caenorhabditis elegans.